The chain runs to 118 residues: MRLLFLVLLVLLGLIQYPLWLGKGGWFKVWDLQRQVAEQRETNDGLRARNTALEAEVRDLATGVGAVEERARSELGMMREGEVFVHILPPGTPLPSGNSTPQASALSKPRPPATPPRR.

Over M1–L3 the chain is Cytoplasmic. Residues L4–L21 traverse the membrane as a helical segment. The Periplasmic segment spans residues G22–R118. The stretch at K28 to T62 forms a coiled coil. A disordered region spans residues L88–R118. Over residues P95–A105 the composition is skewed to polar residues. The span at P109–R118 shows a compositional bias: pro residues.

It belongs to the FtsB family. In terms of assembly, part of a complex composed of FtsB, FtsL and FtsQ.

Its subcellular location is the cell inner membrane. Functionally, essential cell division protein. May link together the upstream cell division proteins, which are predominantly cytoplasmic, with the downstream cell division proteins, which are predominantly periplasmic. The sequence is that of Cell division protein FtsB from Bordetella parapertussis (strain 12822 / ATCC BAA-587 / NCTC 13253).